The primary structure comprises 113 residues: Fruiting body-specific class I hydrophobin fbh1 (113 aa).

The N-terminal stretch at Met-1–Ala-20 is a signal peptide. Cystine bridges form between Cys-33/Cys-92, Cys-40/Cys-86, Cys-41/Cys-73, and Cys-93/Cys-106.

It belongs to the fungal hydrophobin family. As to quaternary structure, self-assembles to form functional amyloid fibrils called rodlets. Self-assembly into fibrillar rodlets occurs spontaneously at hydrophobic:hydrophilic interfaces and the rodlets further associate laterally to form amphipathic monolayers.

The protein localises to the secreted. It localises to the cell wall. In terms of biological role, aerial growth, conidiation, and dispersal of filamentous fungi in the environment rely upon a capability of their secreting small amphipathic proteins called hydrophobins (HPBs) with low sequence identity. Class I can self-assemble into an outermost layer of rodlet bundles on aerial cell surfaces, conferring cellular hydrophobicity that supports fungal growth, development and dispersal; whereas Class II form highly ordered films at water-air interfaces through intermolecular interactions but contribute nothing to the rodlet structure. Fbh1 is a fruiting body-specific class I hydrophobin that is involved in the growth rate and primordia formation. This is Fruiting body-specific class I hydrophobin fbh1 from Pleurotus ostreatus (strain PC15) (Oyster mushroom).